The primary structure comprises 447 residues: BAG family molecular chaperone regulator 5 (447 aa).

5 BAG domains span residues 9-86, 95-167, 182-260, 275-350, and 365-442; these read SISR…EQNA, QNIF…ENCM, SVAK…DLEE, SILK…DLKE, and SHKA…DLKS.

In terms of assembly, binds to the ATPase domain of HSP/HSP70 chaperones. Binds PRKN. Interacts complex with HSPA8 and JPH2.

Its function is as follows. Co-chaperone for HSP/HSP70 proteins. It functions as a nucleotide-exchange factor promoting the release of ADP from HSP70, thereby activating Hsp70-mediated protein refolding. Has an essential role in maintaining proteostasis at junctional membrane complexes (JMC), where it may function as a scaffold between the HSPA8 chaperone and JMC proteins enabling correct, HSPA8-dependent JMC protein folding. Inhibits both auto-ubiquitination of PRKN and ubiquitination of target proteins by PRKN. This Bos taurus (Bovine) protein is BAG family molecular chaperone regulator 5 (BAG5).